The primary structure comprises 405 residues: L-carnitine CoA-transferase (405 aa).

The CoA site is built by lysine 97 and arginine 104. The active-site Nucleophile is aspartate 169.

Belongs to the CoA-transferase III family. CaiB subfamily. In terms of assembly, homodimer.

The protein localises to the cytoplasm. The catalysed reaction is crotonobetainyl-CoA + (R)-carnitine = crotonobetaine + (R)-carnitinyl-CoA. The enzyme catalyses 4-(trimethylamino)butanoyl-CoA + (R)-carnitine = (R)-carnitinyl-CoA + 4-(trimethylamino)butanoate. It participates in amine and polyamine metabolism; carnitine metabolism. Its function is as follows. Catalyzes the reversible transfer of the CoA moiety from gamma-butyrobetainyl-CoA to L-carnitine to generate L-carnitinyl-CoA and gamma-butyrobetaine. Is also able to catalyze the reversible transfer of the CoA moiety from gamma-butyrobetainyl-CoA or L-carnitinyl-CoA to crotonobetaine to generate crotonobetainyl-CoA. The chain is L-carnitine CoA-transferase from Escherichia coli (strain SE11).